A 3392-amino-acid polypeptide reads, in one-letter code: Genome polyprotein (3392 aa).

The interaction with host EXOC1 stretch occupies residues 1 to 15; that stretch reads MNNQRKKTGRPSFNM. Topologically, residues 1-101 are cytoplasmic; it reads MNNQRKKTGR…LNIMNRRKRS (101 aa). Residues 37–72 form a hydrophobic; homodimerization of capsid protein C region; the sequence is LLSGQGPMKLVMAFIAFLRFLAIPPTAGILARWGSF. Residues 101-114 constitute a propeptide, ER anchor for the capsid protein C, removed in mature form by serine protease NS3; it reads SVTMLLMLLPTALA. The chain crosses the membrane as a helical span at residues 102–119; the sequence is VTMLLMLLPTALAFHLTT. The Extracellular portion of the chain corresponds to 120–242; sequence RGGEPHMIVS…QIQKVETWAL (123 aa). An N-linked (GlcNAc...) asparagine; by host glycan is attached at N183. The chain crosses the membrane as a helical span at residues 243–260; it reads RHPGFTVIALFLAHAIGT. S261 is a topological domain (cytoplasmic). A helical transmembrane segment spans residues 262–280; that stretch reads ITQKGIIFILLMLVTPSMA. Topologically, residues 281–725 are extracellular; the sequence is MRCVGIGNRD…IHQIFGTAYG (445 aa). Intrachain disulfides connect C283–C310, C340–C401, C354–C385, and C372–C396. N347 carries N-linked (GlcNAc...) asparagine; by host glycosylation. Residues 378 to 391 form a fusion peptide region; it reads DRGWGNGCGLFGKG. N-linked (GlcNAc...) asparagine; by host glycosylation occurs at N433. 2 disulfides stabilise this stretch: C465–C565 and C582–C613. The chain crosses the membrane as a helical span at residues 726-746; the sequence is VLFSGVSWTMKIGIGILLTWL. The Cytoplasmic segment spans residues 747-752; it reads GLNSRS. A helical transmembrane segment spans residues 753–773; it reads TSLSMTCIAVGMVTLYLGVMV. The Extracellular portion of the chain corresponds to 774-1195; that stretch reads QADSGCVINW…MVGANASDKM (422 aa). 6 disulfide bridges follow: C779–C790, C830–C918, C954–C998, C1055–C1104, C1066–C1088, and C1087–C1091. N-linked (GlcNAc...) asparagine; by host glycosylation is found at N905 and N982. N-linked (GlcNAc...) asparagine; by host glycosylation is present at N1190. A helical membrane pass occupies residues 1196–1220; sequence GMGTTYLALMATFRMRPMFAVGLLF. Residues 1221-1226 are Cytoplasmic-facing; that stretch reads RRLTSR. The helical transmembrane segment at 1227–1245 threads the bilayer; it reads EVLLLTVGLSLVASVELPN. Over 1246–1269 the chain is Lumenal; sequence SLEELGDGLAMGIMMLKLLTDFQS. The chain crosses the membrane as a helical span at residues 1270-1290; it reads HQLWATLLSLTFVKTTFSLHY. Residue A1291 is a topological domain, cytoplasmic. The chain crosses the membrane as a helical span at residues 1292 to 1310; it reads WKTMAMILSIVSLFPLCLS. Residues 1311 to 1315 lie on the Lumenal side of the membrane; it reads TTSQK. Residues 1316–1336 form a helical membrane-spanning segment; it reads TTWLPVLLGSLGCKPLTMFLI. The Cytoplasmic portion of the chain corresponds to 1337-1351; it reads TENKIWGRKSWPLNE. The chain crosses the membrane as a helical span at residues 1352–1370; that stretch reads GIMAVGIVSILLSSLLKND. A topological domain (lumenal) is located at residue V1371. A helical transmembrane segment spans residues 1372–1391; sequence PLAGPLIAGGMLIACYVISG. Residues 1392 to 1447 lie on the Cytoplasmic side of the membrane; it reads SSADLSLEKAAEVSWEEEAEHSGASHNILVEVQDDGTMKIKDEERDDTLTILLKAT. Residues 1398–1437 are interacts with and activates NS3 protease; it reads LEKAAEVSWEEEAEHSGASHNILVEVQDDGTMKIKDEERD. Residues 1448 to 1468 constitute an intramembrane region (helical); the sequence is LLAISGVYPMSIPATLFVWYF. The Cytoplasmic segment spans residues 1469-2148; it reads WQKKKQRSGV…MEELPDTIET (680 aa). A Peptidase S7 domain is found at 1476–1653; it reads SGVLWDTPSP…KASQEGPLPE (178 aa). Active-site charge relay system; for serine protease NS3 activity residues include H1526, D1550, and S1610. Positions 1656-1812 constitute a Helicase ATP-binding domain; sequence DEVFRKRNLT…QSNAVIQDEE (157 aa). The segment at 1660–1663 is important for RNA-binding; sequence RKRN. Position 1669–1676 (1669–1676) interacts with ATP; it reads LHPGSGKT. The short motif at 1760–1763 is the DEAH box element; the sequence is DEAH. The Helicase C-terminal domain maps to 1822–1988; sequence SGYDWITDFP…GIIPALFEPE (167 aa). At K1864 the chain carries N6-acetyllysine; by host. Residues 2149 to 2169 form a helical membrane-spanning segment; sequence LMLLALIAVLTGGVTLFFLSG. Over 2170–2171 the chain is Lumenal; the sequence is RG. The segment at residues 2172-2192 is an intramembrane region (helical); that stretch reads LGKTSIGLLCVIASSALLWMA. Position 2193 (S2193) is a topological domain, lumenal. A helical membrane pass occupies residues 2194–2214; that stretch reads VEPHWIAASIILEFFLMVLLI. At 2215–2229 the chain is on the cytoplasmic side; sequence PEPDRQRTPQDNQLA. The chain crosses the membrane as a helical span at residues 2230–2244; sequence YVVIGLLFMILTAAA. Residues 2245–2276 are Lumenal-facing; the sequence is NEMGLLETTKKDLGIGHAAAENHHHAAMLDVD. Positions 2277-2297 form an intramembrane region, helical; the sequence is LHPASAWTLYAVATTIITPMM. The Lumenal portion of the chain corresponds to 2298-2349; it reads RHTIENTTANISLTAIANQAAILMGLDKGWPISKMDIGVPLLALGCYSQVNP. N2303 and N2307 each carry an N-linked (GlcNAc...) asparagine; by host glycan. Residues 2350-2370 form a helical membrane-spanning segment; sequence LTLTAAVFMLVAHYAIIGPGL. At 2371 to 2415 the chain is on the cytoplasmic side; sequence QAKATREAQKRTAAGIMKNPTVDGIVAIDLDPVVYDAKFEKQLGQ. Residues 2416–2436 form a helical membrane-spanning segment; it reads IMLLILCTSQILLMRTTWALC. Over 2437–2461 the chain is Lumenal; the sequence is ESITLATGPLTTLWEGSPGKFWNTT. Residue N2459 is glycosylated (N-linked (GlcNAc...) asparagine; by host). The helical transmembrane segment at 2462-2482 threads the bilayer; it reads IAVSMANIFRGSYLAGAGLAF. At 2483–3392 the chain is on the cytoplasmic side; it reads SLMKSLGGGR…NESDPEGALW (910 aa). The mRNA cap 0-1 NS5-type MT domain maps to 2495–2756; that stretch reads TGAQGETLGE…DVDLGAGTRH (262 aa). Position 2549 (S2549) interacts with S-adenosyl-L-methionine. A Phosphoserine modification is found at S2549. The active-site For 2'-O-MTase activity is K2554. The SUMO-interacting motif motif lies at 2570–2573; sequence VIDL. S-adenosyl-L-methionine-binding residues include G2579, W2580, T2597, K2598, D2624, and V2625. The active-site For 2'-O-MTase activity is the D2639. I2640 lines the S-adenosyl-L-methionine pocket. Active-site for 2'-O-MTase activity residues include K2673 and E2709. Y2711 serves as a coordination point for S-adenosyl-L-methionine. 4 residues coordinate Zn(2+): E2930, H2934, C2939, and C2942. The 150-residue stretch at 3020–3169 folds into the RdRp catalytic domain; it reads GNMYADDTAG…KPIDDRFATA (150 aa). Positions 3204, 3220, and 3339 each coordinate Zn(2+).

The protein in the N-terminal section; belongs to the class I-like SAM-binding methyltransferase superfamily. mRNA cap 0-1 NS5-type methyltransferase family. In terms of assembly, homodimer. Interacts (via N-terminus) with host EXOC1 (via C-terminus); this interaction results in EXOC1 degradation through the proteasome degradation pathway. Forms heterodimers with envelope protein E in the endoplasmic reticulum and Golgi. As to quaternary structure, homodimer; in the endoplasmic reticulum and Golgi. Interacts with protein prM. Interacts with non-structural protein 1. In terms of assembly, homodimer; Homohexamer when secreted. Interacts with envelope protein E. Interacts (via N-terminus) with serine protease NS3. As to quaternary structure, forms a heterodimer with serine protease NS3. May form homooligomers. In terms of assembly, forms a heterodimer with NS2B. Interacts with NS4B. Interacts with unphosphorylated RNA-directed RNA polymerase NS5; this interaction stimulates RNA-directed RNA polymerase NS5 guanylyltransferase activity. Interacts with host SHFL. Interacts with host MAVS; this interaction inhibits the synthesis of IFN-beta. Interacts with host SHFL. Interacts with host AUP1; the interaction occurs in the presence of Dengue virus NS4B and induces lipophagy which facilitates production of virus progeny particles. As to quaternary structure, interacts with serine protease NS3. In terms of assembly, homodimer. Interacts with host STAT2; this interaction inhibits the phosphorylation of the latter, and, when all viral proteins are present (polyprotein), targets STAT2 for degradation. Interacts with serine protease NS3. In terms of processing, sumoylation of RNA-directed RNA polymerase NS5 increases NS5 protein stability allowing proper viral RNA replication. Post-translationally, specific enzymatic cleavages in vivo yield mature proteins. Cleavages in the lumen of endoplasmic reticulum are performed by host signal peptidase, whereas cleavages in the cytoplasmic side are performed by the Serine protease NS3. Signal cleavage at the 2K-4B site requires a prior NS3 protease-mediated cleavage at the 4A-2K site. Cleaved in post-Golgi vesicles by a host furin, releasing the mature small envelope protein M, and peptide pr. This cleavage is incomplete as up to 30% of viral particles still carry uncleaved prM. In terms of processing, N-glycosylated. The excreted form is glycosylated and this is required for efficient secretion of the protein from infected cells. Post-translationally, acetylated by host KAT5. Acetylation modulates NS3 RNA-binding and unwinding activities and plays an important positive role for viral replication. Phosphorylated on serines residues. This phosphorylation may trigger NS5 nuclear localization. In terms of processing, N-glycosylated.

Its subcellular location is the virion. It localises to the host nucleus. The protein resides in the host cytoplasm. The protein localises to the host perinuclear region. It is found in the secreted. Its subcellular location is the virion membrane. It localises to the host endoplasmic reticulum membrane. The protein resides in the host mitochondrion. It carries out the reaction Selective hydrolysis of -Xaa-Xaa-|-Yaa- bonds in which each of the Xaa can be either Arg or Lys and Yaa can be either Ser or Ala.. The catalysed reaction is RNA(n) + a ribonucleoside 5'-triphosphate = RNA(n+1) + diphosphate. The enzyme catalyses a ribonucleoside 5'-triphosphate + H2O = a ribonucleoside 5'-diphosphate + phosphate + H(+). It catalyses the reaction ATP + H2O = ADP + phosphate + H(+). It carries out the reaction a 5'-end (5'-triphosphoguanosine)-ribonucleoside in mRNA + S-adenosyl-L-methionine = a 5'-end (N(7)-methyl 5'-triphosphoguanosine)-ribonucleoside in mRNA + S-adenosyl-L-homocysteine. The catalysed reaction is a 5'-end (N(7)-methyl 5'-triphosphoguanosine)-ribonucleoside in mRNA + S-adenosyl-L-methionine = a 5'-end (N(7)-methyl 5'-triphosphoguanosine)-(2'-O-methyl-ribonucleoside) in mRNA + S-adenosyl-L-homocysteine + H(+). In terms of biological role, plays a role in virus budding by binding to the cell membrane and gathering the viral RNA into a nucleocapsid that forms the core of a mature virus particle. During virus entry, may induce genome penetration into the host cytoplasm after hemifusion induced by the surface proteins. Can migrate to the cell nucleus where it modulates host functions. Overcomes the anti-viral effects of host EXOC1 by sequestering and degrading the latter through the proteasome degradation pathway. Functionally, inhibits RNA silencing by interfering with host Dicer. Its function is as follows. Prevents premature fusion activity of envelope proteins in trans-Golgi by binding to envelope protein E at pH6.0. After virion release in extracellular space, gets dissociated from E dimers. Acts as a chaperone for envelope protein E during intracellular virion assembly by masking and inactivating envelope protein E fusion peptide. prM is the only viral peptide matured by host furin in the trans-Golgi network probably to avoid catastrophic activation of the viral fusion activity in acidic Golgi compartment prior to virion release. prM-E cleavage is inefficient, and many virions are only partially matured. These uncleaved prM would play a role in immune evasion. In terms of biological role, may play a role in virus budding. Exerts cytotoxic effects by activating a mitochondrial apoptotic pathway through M extodomain. May display a viroporin activity. Functionally, binds to host cell surface receptor and mediates fusion between viral and cellular membranes. Envelope protein is synthesized in the endoplasmic reticulum in the form of heterodimer with protein prM. They play a role in virion budding in the ER, and the newly formed immature particle is covered with 60 spikes composed of heterodimer between precursor prM and envelope protein E. The virion is transported to the Golgi apparatus where the low pH causes dissociation of PrM-E heterodimers and formation of E homodimers. prM-E cleavage is ineficient, and many virions are only partially matured. These uncleaved prM would play a role in immune evasion. Its function is as follows. Involved in immune evasion, pathogenesis and viral replication. Once cleaved off the polyprotein, is targeted to three destinations: the viral replication cycle, the plasma membrane and the extracellular compartment. Essential for viral replication. Required for formation of the replication complex and recruitment of other non-structural proteins to the ER-derived membrane structures. Excreted as a hexameric lipoparticle that plays a role against host immune response. Antagonizing the complement function. Binds to the host macrophages and dendritic cells. Inhibits signal transduction originating from Toll-like receptor 3 (TLR3). Disrupts the host endothelial glycocalyx layer of host pulmonary microvascular endothelial cells, inducing degradation of sialic acid and shedding of heparan sulfate proteoglycans. NS1 induces expression of sialidases, heparanase, and activates cathepsin L, which activates heparanase via enzymatic cleavage. These effects are probably linked to the endothelial hyperpermeability observed in severe dengue disease. In terms of biological role, component of the viral RNA replication complex that functions in virion assembly and antagonizes the host immune response. Functionally, required cofactor for the serine protease function of NS3. May have membrane-destabilizing activity and form viroporins. Its function is as follows. Displays three enzymatic activities: serine protease, NTPase and RNA helicase. NS3 serine protease, in association with NS2B, performs its autocleavage and cleaves the polyprotein at dibasic sites in the cytoplasm: C-prM, NS2A-NS2B, NS2B-NS3, NS3-NS4A, NS4A-2K and NS4B-NS5. NS3 RNA helicase binds RNA and unwinds dsRNA in the 3' to 5' direction. Regulates the ATPase activity of the NS3 helicase activity. NS4A allows NS3 helicase to conserve energy during unwinding. Plays a role in the inhibition of the host innate immune response. Interacts with host MAVS and thereby prevents the interaction between RIGI and MAVS. In turn, IFN-beta production is impaired. Interacts with host AUP1 which mediates induction of lipophagy in host cells and facilitates production of virus progeny particles. In terms of biological role, functions as a signal peptide for NS4B and is required for the interferon antagonism activity of the latter. Functionally, induces the formation of ER-derived membrane vesicles where the viral replication takes place. Inhibits interferon (IFN)-induced host STAT1 phosphorylation and nuclear translocation, thereby preventing the establishment of a cellular antiviral state by blocking the IFN-alpha/beta pathway. Its function is as follows. Replicates the viral (+) and (-) RNA genome, and performs the capping of genomes in the cytoplasm. NS5 methylates viral RNA cap at guanine N-7 and ribose 2'-O positions. Besides its role in RNA genome replication, also prevents the establishment of cellular antiviral state by blocking the interferon-alpha/beta (IFN-alpha/beta) signaling pathway. Inhibits host TYK2 and STAT2 phosphorylation, thereby preventing activation of JAK-STAT signaling pathway. This chain is Genome polyprotein, found in Aedes aegypti (Yellowfever mosquito).